Here is an 83-residue protein sequence, read N- to C-terminus: DNA-directed RNA polymerase subunit omega (83 aa).

The protein belongs to the RNA polymerase subunit omega family. In terms of assembly, the RNAP catalytic core consists of 2 alpha, 1 beta, 1 beta' and 1 omega subunit. When a sigma factor is associated with the core the holoenzyme is formed, which can initiate transcription.

It carries out the reaction RNA(n) + a ribonucleoside 5'-triphosphate = RNA(n+1) + diphosphate. Promotes RNA polymerase assembly. Latches the N- and C-terminal regions of the beta' subunit thereby facilitating its interaction with the beta and alpha subunits. The polypeptide is DNA-directed RNA polymerase subunit omega (Chromohalobacter salexigens (strain ATCC BAA-138 / DSM 3043 / CIP 106854 / NCIMB 13768 / 1H11)).